We begin with the raw amino-acid sequence, 331 residues long: Putative ankyrin repeat protein FPV012 (331 aa).

ANK repeat units follow at residues D11–T40, D44–K73, D77–Y106, and Y110–Q139.

The chain is Putative ankyrin repeat protein FPV012 from Vertebrata (FPV).